A 312-amino-acid chain; its full sequence is MGKSKVLVVGGTGYVGRRIVKASLEHGHETFILQRPEIGLDIEKLQILLSFKKQGAILVEASFSDHKSLVDAVKLVDVVICTMSGVHFRSHNLLTQLKLVEAIKDAGNIKRFLPSEFGMDPALMGHALEPGRVTFDEKMTVRKAIEEANIPFTYISANCFAGYFAGNLSQMKTLLPPRDKVLLYGDGNVKPVYMDEDDVATYTIKTIDDPRTLNKTVYLRPPENILTHKELIEKWEELIGKQLEKNSISEKDFLSTLKGLDFASQVGVGHFYHIFYEGCLTNFEIGENGEEASELYPEVNYTRMDQYLKVYV.

NADP(+) contacts are provided by residues 10 to 16 (GGTGYVG), Arg-35, and Lys-44. Catalysis depends on Lys-138, which acts as the Proton acceptor. Residue Arg-142 participates in NADP(+) binding. A substrate-binding site is contributed by His-270.

It belongs to the NmrA-type oxidoreductase family. Isoflavone reductase subfamily.

The protein is Isoflavone reductase homolog of Lupinus albus (White lupine).